The primary structure comprises 273 residues: MTRPAVSYDELDEYLRGDGHNDYVGVSAIDGLIAAVVAGPVTILPDIWLPHVFGGSMPQARPGSIEERLVNTVLNRHDEVESLLRDAPGHYYPIFMNHKGKTIVGPWAIGFSLGLSLGGEAWAPIAGNAKASDLPHHGRQSAAGQTAHPAFSSGAAEIESNRSSSHHIRSPAVARHHKTGPITTQPPAQTQPYRKTACSLRLQCTRSVEHDTQARGGPCIPGVSGLKLGLRPADRWSGCRWEHVVAYLGSPLYESTSTCAEGADRQLLVLRED.

2 helical membrane-spanning segments follow: residues 24–44 (VGVSAIDGLIAAVVAGPVTIL) and 103–123 (IVGPWAIGFSLGLSLGGEAWA). The interval 132–194 (SDLPHHGRQS…QPPAQTQPYR (63 aa)) is disordered. Residues 164 to 179 (SSHHIRSPAVARHHKT) are compositionally biased toward basic residues. Over residues 183 to 192 (TTQPPAQTQP) the composition is skewed to low complexity.

The protein resides in the cell membrane. This is an uncharacterized protein from Sinorhizobium fredii (strain NBRC 101917 / NGR234).